The primary structure comprises 216 residues: Octanoyltransferase (216 aa).

Residues 32-211 enclose the BPL/LPL catalytic domain; the sequence is QEASEMLWFL…RFPYFLEALQ (180 aa). Substrate contacts are provided by residues 71–78, 142–144, and 155–157; these read RGGRYTYH, AIG, and GFS. Residue cysteine 173 is the Acyl-thioester intermediate of the active site.

Belongs to the LipB family.

The protein resides in the cytoplasm. It carries out the reaction octanoyl-[ACP] + L-lysyl-[protein] = N(6)-octanoyl-L-lysyl-[protein] + holo-[ACP] + H(+). It participates in protein modification; protein lipoylation via endogenous pathway; protein N(6)-(lipoyl)lysine from octanoyl-[acyl-carrier-protein]: step 1/2. Catalyzes the transfer of endogenously produced octanoic acid from octanoyl-acyl-carrier-protein onto the lipoyl domains of lipoate-dependent enzymes. Lipoyl-ACP can also act as a substrate although octanoyl-ACP is likely to be the physiological substrate. The protein is Octanoyltransferase of Zymomonas mobilis subsp. mobilis (strain ATCC 31821 / ZM4 / CP4).